The sequence spans 351 residues: Holliday junction branch migration complex subunit RuvB (351 aa).

The segment at 1-22 is disordered; the sequence is MSDPKANRMVSPERRSDDVGDT. Positions 2 to 185 are large ATPase domain (RuvB-L); it reads SDPKANRMVS…FGIPVRLNFY (184 aa). ATP is bound by residues Leu24, Arg25, Gly66, Lys69, Thr70, Thr71, 132-134, Arg175, Tyr185, and Arg222; that span reads EDF. Residue Thr70 coordinates Mg(2+). Residues 186-256 form a small ATPAse domain (RuvB-S) region; the sequence is TIEELESIVS…IADHALSALE (71 aa). A head domain (RuvB-H) region spans residues 259–351; the sequence is AAGLDAMDRR…GLFGTDESDD (93 aa). DNA is bound by residues Arg295, Arg314, and Arg319.

It belongs to the RuvB family. As to quaternary structure, homohexamer. Forms an RuvA(8)-RuvB(12)-Holliday junction (HJ) complex. HJ DNA is sandwiched between 2 RuvA tetramers; dsDNA enters through RuvA and exits via RuvB. An RuvB hexamer assembles on each DNA strand where it exits the tetramer. Each RuvB hexamer is contacted by two RuvA subunits (via domain III) on 2 adjacent RuvB subunits; this complex drives branch migration. In the full resolvosome a probable DNA-RuvA(4)-RuvB(12)-RuvC(2) complex forms which resolves the HJ.

The protein localises to the cytoplasm. The catalysed reaction is ATP + H2O = ADP + phosphate + H(+). Its function is as follows. The RuvA-RuvB-RuvC complex processes Holliday junction (HJ) DNA during genetic recombination and DNA repair, while the RuvA-RuvB complex plays an important role in the rescue of blocked DNA replication forks via replication fork reversal (RFR). RuvA specifically binds to HJ cruciform DNA, conferring on it an open structure. The RuvB hexamer acts as an ATP-dependent pump, pulling dsDNA into and through the RuvAB complex. RuvB forms 2 homohexamers on either side of HJ DNA bound by 1 or 2 RuvA tetramers; 4 subunits per hexamer contact DNA at a time. Coordinated motions by a converter formed by DNA-disengaged RuvB subunits stimulates ATP hydrolysis and nucleotide exchange. Immobilization of the converter enables RuvB to convert the ATP-contained energy into a lever motion, pulling 2 nucleotides of DNA out of the RuvA tetramer per ATP hydrolyzed, thus driving DNA branch migration. The RuvB motors rotate together with the DNA substrate, which together with the progressing nucleotide cycle form the mechanistic basis for DNA recombination by continuous HJ branch migration. Branch migration allows RuvC to scan DNA until it finds its consensus sequence, where it cleaves and resolves cruciform DNA. This Bradyrhizobium diazoefficiens (strain JCM 10833 / BCRC 13528 / IAM 13628 / NBRC 14792 / USDA 110) protein is Holliday junction branch migration complex subunit RuvB.